The chain runs to 255 residues: Small ribosomal subunit protein eS1 (255 aa).

Ala-2 is modified (N-acetylalanine; partial).

Belongs to the eukaryotic ribosomal protein eS1 family. In terms of assembly, component of the small ribosomal subunit. Mature ribosomes consist of a small (40S) and a large (60S) subunit. The 40S subunit contains about 33 different proteins and 1 molecule of RNA (18S). The 60S subunit contains about 49 different proteins and 3 molecules of RNA (25S, 5.8S and 5S).

It is found in the cytoplasm. The sequence is that of Small ribosomal subunit protein eS1 from Arthroderma otae (strain ATCC MYA-4605 / CBS 113480) (Microsporum canis).